The sequence spans 432 residues: Glutamyl-tRNA reductase (432 aa).

Residues 49-52 (TCNR), S107, 112-114 (ETQ), and Q118 contribute to the substrate site. C50 serves as the catalytic Nucleophile. Position 186–191 (186–191 (GAGEMG)) interacts with NADP(+).

The protein belongs to the glutamyl-tRNA reductase family. As to quaternary structure, homodimer.

It carries out the reaction (S)-4-amino-5-oxopentanoate + tRNA(Glu) + NADP(+) = L-glutamyl-tRNA(Glu) + NADPH + H(+). It functions in the pathway porphyrin-containing compound metabolism; protoporphyrin-IX biosynthesis; 5-aminolevulinate from L-glutamyl-tRNA(Glu): step 1/2. Functionally, catalyzes the NADPH-dependent reduction of glutamyl-tRNA(Glu) to glutamate 1-semialdehyde (GSA). This is Glutamyl-tRNA reductase from Campylobacter jejuni (strain RM1221).